The following is a 162-amino-acid chain: Large ribosomal subunit protein uL10 (162 aa).

The protein belongs to the universal ribosomal protein uL10 family. As to quaternary structure, part of the ribosomal stalk of the 50S ribosomal subunit. The N-terminus interacts with L11 and the large rRNA to form the base of the stalk. The C-terminus forms an elongated spine to which L12 dimers bind in a sequential fashion forming a multimeric L10(L12)X complex.

In terms of biological role, forms part of the ribosomal stalk, playing a central role in the interaction of the ribosome with GTP-bound translation factors. The protein is Large ribosomal subunit protein uL10 (rplJ) of Borreliella burgdorferi (strain ATCC 35210 / DSM 4680 / CIP 102532 / B31) (Borrelia burgdorferi).